Consider the following 220-residue polypeptide: dTTP/UTP pyrophosphatase (220 aa).

Catalysis depends on Asp83, which acts as the Proton acceptor.

It belongs to the Maf family. YhdE subfamily. A divalent metal cation serves as cofactor.

The protein localises to the cytoplasm. It carries out the reaction dTTP + H2O = dTMP + diphosphate + H(+). It catalyses the reaction UTP + H2O = UMP + diphosphate + H(+). Functionally, nucleoside triphosphate pyrophosphatase that hydrolyzes dTTP and UTP. May have a dual role in cell division arrest and in preventing the incorporation of modified nucleotides into cellular nucleic acids. The sequence is that of dTTP/UTP pyrophosphatase from Syntrophotalea carbinolica (strain DSM 2380 / NBRC 103641 / GraBd1) (Pelobacter carbinolicus).